The sequence spans 90 residues: Lectin-1 (90 aa).

Position 1 is a pyrrolidone carboxylic acid (Gln-1). A disulfide bridge links Cys-46 with Cys-71.

Post-translationally, the N-terminus is blocked. In terms of processing, contains seven disulfide bonds. Proteolytically cleaved. Major form may consist of cleaved, disulfide-bonded subunits.

In terms of biological role, lectin with specificity for complex N-linked glycans and O-linked glycans. Has hemagglutinating activity towards rabbit erythrocytes that is inhibited by N-acetyl-D-galactosamine. This is Lectin-1 from Hypnea cervicornis (Brazilian red alga).